A 353-amino-acid polypeptide reads, in one-letter code: Lipase chaperone (353 aa).

Residues 12-32 (IVLYLILGCVVVCGVWYSFDV) traverse the membrane as a helical segment.

The protein belongs to the lipase chaperone family.

The protein localises to the cell inner membrane. Functionally, may be involved in the folding of the extracellular lipase during its passage through the periplasm. The chain is Lipase chaperone from Xylella fastidiosa (strain M23).